Reading from the N-terminus, the 102-residue chain is Small ribosomal subunit protein uS10 (102 aa).

This sequence belongs to the universal ribosomal protein uS10 family. As to quaternary structure, part of the 30S ribosomal subunit.

Involved in the binding of tRNA to the ribosomes. The sequence is that of Small ribosomal subunit protein uS10 from Pseudothermotoga lettingae (strain ATCC BAA-301 / DSM 14385 / NBRC 107922 / TMO) (Thermotoga lettingae).